We begin with the raw amino-acid sequence, 1409 residues long: Receptor-type tyrosine-protein phosphatase (1409 aa).

The signal sequence occupies residues 1–22; it reads MRINRWIWWATVILLYLRTGLA. The Extracellular portion of the chain corresponds to 23–712; sequence ADFFRSSEEN…LLDTESSSSG (690 aa). Residues 32 to 53 form a disordered region; sequence NDRKSSDDLDNFNSTKIEPDKP. Residues 159-267 form the Ig-like C2-type domain; the sequence is PTKCDKRDLA…TASASDLDVT (109 aa). A disulfide bridge links Cys189 with Cys255. Fibronectin type-III domains are found at residues 276 to 366 and 372 to 502; these read APRQ…TKQK and KEED…AQPD. A helical membrane pass occupies residues 713–733; sequence FGIFMKIILPFLLFLAFATGV. Residues 734–1409 are Cytoplasmic-facing; it reads TMFFVNRKGH…LADYISKTYR (676 aa). Tyrosine-protein phosphatase domains are found at residues 793 to 1072 and 1135 to 1403; these read FAQE…LAEW and LEEE…LADY. Residues Cys1013 and Cys1344 each act as phosphocysteine intermediate in the active site.

It belongs to the protein-tyrosine phosphatase family. Receptor class 2A subfamily. Expressed in muscles, hypodermis and a subset of neurons. Expressed in the AVA neurons, with high expression in the anterior half of the preanal ganglion where AVA neurons contact the PHB neurons.

The protein resides in the cell membrane. The protein localises to the synapse. The catalysed reaction is O-phospho-L-tyrosyl-[protein] + H2O = L-tyrosyl-[protein] + phosphate. Its function is as follows. Possesses an intrinsic protein tyrosine phosphatase (PTPase) activity. Regulates egl-15 activity which is required for hypodermis-mediated fluid homeostasis and protein degradation in muscle. During the formation of neuromuscular junctions at the larval stage, negatively regulates membrane protrusion from body wall muscles. Plays a role in nicotinic acetylcholine receptor (nAChR)-mediated sensitivity to nicotine. Regulates synaptic levels of nAchR subunit lev-1 in the nerve cord. Promotes the outgrowth of the quaternary dendritic branches of the PVD sensory neurons. In parallel to the sax-7/mnr-1 pathway, also controls the extension of the PVD primary branches. Acts in the netrin/DCC pathway to mediate the formation of synapses between the AVA interneurons and the PHB sensory neurons. Also required for the formation of synapses between the AVA interneurons and the VA10 motor neurons. The chain is Receptor-type tyrosine-protein phosphatase from Caenorhabditis elegans.